The chain runs to 721 residues: YTH domain-containing protein 1 (721 aa).

Positions E29–D38 are enriched in acidic residues. The disordered stretch occupies residues E29 to K239. The segment covering S48–S75 has biased composition (low complexity). Over residues A135 to P151 the composition is skewed to basic and acidic residues. The YTH domain maps to T254–F391. Residues K260 to N262, W276, and W327 each bind RNA. Disordered stretches follow at residues P424 to H471, D580 to P605, and A651 to R721. Over residues G432–G443 the composition is skewed to gly residues. The span at P451–H471 shows a compositional bias: basic residues. The span at G583–G600 shows a compositional bias: pro residues. Positions A651–G670 are enriched in gly residues. Residues R699–G708 are compositionally biased toward basic and acidic residues.

It localises to the nucleus. In terms of biological role, regulator of alternative splicing that specifically recognizes and binds N6-methyladenosine (m6A)-containing RNAs. Acts by acting as a reader of m6A methylation. Required for sex determination and dosage compensation via Sxl alternative splicing: m6A methylation acts as a key regulator of Sxl pre-mRNA and promotes female-specific alternative splicing of Sxl, which determines female physiognomy. M6A methylation is also required for neuronal functions. The sequence is that of YTH domain-containing protein 1 from Drosophila melanogaster (Fruit fly).